We begin with the raw amino-acid sequence, 22 residues long: NLFQFARMINKKLGAFXFXNYI.

The protein belongs to the phospholipase A2 family. Group II subfamily. Requires Ca(2+) as cofactor. Seven disulfide bonds are present. As to expression, expressed by the venom gland.

The protein resides in the secreted. It carries out the reaction a 1,2-diacyl-sn-glycero-3-phosphocholine + H2O = a 1-acyl-sn-glycero-3-phosphocholine + a fatty acid + H(+). In terms of biological role, snake venom phospholipase A2 (PLA2) that inhibits neuromuscular transmission by blocking acetylcholine release from the nerve termini. PLA2 catalyzes the calcium-dependent hydrolysis of the 2-acyl groups in 3-sn-phosphoglycerides. This is Phospholipase A2 from Daboia siamensis (Eastern Russel's viper).